Here is a 175-residue protein sequence, read N- to C-terminus: Catabolic 3-dehydroquinase (175 aa).

Tyr-26 (proton acceptor) is an active-site residue. Substrate-binding residues include Asn-104, His-110, and Asp-117. His-130 acts as the Proton donor in catalysis. Substrate contacts are provided by residues 131-132 (VS) and Arg-141.

It belongs to the type-II 3-dehydroquinase family. Homododecamer. Adopts a ring-like structure, composed of an arrangement of two hexameric rings stacked on top of one another.

It carries out the reaction 3-dehydroquinate = 3-dehydroshikimate + H2O. It functions in the pathway aromatic compound metabolism; 3,4-dihydroxybenzoate biosynthesis; 3,4-dihydroxybenzoate from 3-dehydroquinate: step 1/2. In terms of biological role, is involved in the catabolism of quinate. Allows the utilization of quinate as carbon source via the beta-ketoadipate pathway. The chain is Catabolic 3-dehydroquinase from Sordaria macrospora (strain ATCC MYA-333 / DSM 997 / K(L3346) / K-hell).